Here is a 451-residue protein sequence, read N- to C-terminus: UPF0210 protein APL_1491 (451 aa).

Belongs to the UPF0210 family. Homodimer.

The protein is UPF0210 protein APL_1491 of Actinobacillus pleuropneumoniae serotype 5b (strain L20).